Reading from the N-terminus, the 315-residue chain is Olfactory receptor 4A5 (315 aa).

Topologically, residues 1 to 23 are extracellular; it reads MRQNNNITEFVLLGFSQDPGVQK. N-linked (GlcNAc...) asparagine glycosylation is present at Asn6. A helical transmembrane segment spans residues 24-47; it reads ALFVMFLLTYLVTVVGNLLIVVDI. Residues 48–55 are Cytoplasmic-facing; that stretch reads IASPSLGS. The chain crosses the membrane as a helical span at residues 56-77; that stretch reads PMYFFLACLSFIDAAYSTTISP. At 78-98 the chain is on the extracellular side; it reads KLIVGLFCDKKTISFQGCMGQ. Cysteines 95 and 186 form a disulfide. The chain crosses the membrane as a helical span at residues 99-118; the sequence is LFIDHFFGGAEVFLLVVMAC. Topologically, residues 119-137 are cytoplasmic; that stretch reads DRYVAICKPLHYLTIMNRQ. The chain crosses the membrane as a helical span at residues 138-156; sequence VCFLLLVVAMIGGFVHSAF. The Extracellular portion of the chain corresponds to 157 to 192; sequence QIVVYSLPFCGPNVIVHFSCDMHPLLELACTDTYFI. Residues 193–216 traverse the membrane as a helical segment; that stretch reads GLTVVVNSGAICMVIFNLLLISYG. Topologically, residues 217 to 232 are cytoplasmic; that stretch reads VILSSLKTYSQEKRGK. Residues 233–255 form a helical membrane-spanning segment; the sequence is ALSTCSSGSTVVVLFFVPCIFIY. Residues 256–266 lie on the Extracellular side of the membrane; the sequence is VRPVSNFPTDK. A helical membrane pass occupies residues 267 to 286; it reads FMTVFYTIITHMLSPLIYTL. Residues 287-315 are Cytoplasmic-facing; sequence RNSEMRNAIEKLLGKKLTIFIIGGVSVLM.

This sequence belongs to the G-protein coupled receptor 1 family.

It localises to the cell membrane. Functionally, odorant receptor. The chain is Olfactory receptor 4A5 (OR4A5) from Homo sapiens (Human).